Consider the following 1170-residue polypeptide: Glucose transport transcription regulator RGT1 (1170 aa).

The span at M1–N22 shows a compositional bias: polar residues. 2 disordered regions span residues M1 to C47 and S77 to V149. The zn(2)-C6 fungal-type DNA-binding region spans C47–C76. Residues R99 to N108 are compositionally biased toward basic and acidic residues. The span at N113 to T138 shows a compositional bias: low complexity. Residues V139–V149 show a composition bias toward polar residues. S202, S205, S208, and S229 each carry phosphoserine. 5 disordered regions span residues V226–G254, A269–L288, S293–G323, A384–T506, and N944–P977. Residues S239–G250 show a composition bias toward low complexity. A compositionally biased stretch (basic and acidic residues) spans T271–R280. Phosphoserine is present on residues S283 and S284. Low complexity-rich tracts occupy residues S293–P302, Q309–G323, and Q385–Q397. Phosphoserine is present on residues S410 and S414. The span at A411 to L422 shows a compositional bias: polar residues. The span at G424–S444 shows a compositional bias: low complexity. The segment covering K445 to T457 has biased composition (polar residues). Residues S473–P488 show a composition bias toward basic residues. The span at S493–T506 shows a compositional bias: polar residues. The residue at position 1130 (S1130) is a Phosphoserine.

This sequence belongs to the EDS1/RGT1 family. Post-translationally, glucose-induced phosphorylation regulates the DNA-binding activity. Hyperphosphorylation in cells growing on high levels of glucose does prevents DNA-binding and dephosphorylation restores DNA-binding ability.

The protein localises to the nucleus. The protein resides in the cytoplasm. In terms of biological role, glucose-responsive transcription factor that regulates expression of several glucose transporter (HXT) genes in response to glucose. In the absence of glucose, it functions as a transcriptional repressor, whereas high concentrations of glucose cause it to function as a transcriptional activator. In cells growing on low levels of glucose, has a neutral role, neither repressing nor activating transcription. Binds the consensus binding site sequence 5'-CGGANNA-3', of which multiple copies are present in all HXT promoters regulated by RGT1. This is Glucose transport transcription regulator RGT1 (RGT1) from Saccharomyces cerevisiae (strain JAY291) (Baker's yeast).